Here is a 455-residue protein sequence, read N- to C-terminus: MQLPIVAIIGRPNVGKSTLLNRLAGGSEAIVYDQPGVTRDRLYLPAEWCGYRFEVVDTGGLVFEDSEVFLPLIREQVEIALAEAAAVLFVVDGQQGITGGDREVADWLRGRKPPVLIVANKLEEPSTALSLAAEFYALGLGEPYAVSAIHGSGTGDLLDALVAVLPKDQPEEQELPELRVSIVGRPNVGKSSLLNALVGGEHPRSMVSEVAGTTRDAIDTLVEHGERRYRLIDTAGIRRKSRVDYGPEAFGVTRAIRAIRRADVVVLVVDATEGIHDQERNLAAKIASAGRACVLVVNKWDAIEKDTYTMNHYRDEMRRELDFVEWAPVVFTSALTGQRVEKIFDAIDAAAGQHQRRVSTSVLNEALQDALLWRSPPASRQGRQGKVYYATQIATNPPTFVLFVNDTKLFKEGYRRYLEGQFRGSLGFEGSPVRFIFRGKPEREANRTARKSEPV.

EngA-type G domains lie at 4-169 and 178-355; these read PIVA…PKDQ and LRVS…GQHQ. GTP is bound by residues 10 to 17, 57 to 61, 120 to 123, 184 to 191, 233 to 237, and 298 to 301; these read GRPNVGKS, DTGGL, NKLE, DTAGI, and NKWD. Residues 356–441 enclose the KH-like domain; sequence RRVSTSVLNE…PVRFIFRGKP (86 aa).

This sequence belongs to the TRAFAC class TrmE-Era-EngA-EngB-Septin-like GTPase superfamily. EngA (Der) GTPase family. As to quaternary structure, associates with the 50S ribosomal subunit.

GTPase that plays an essential role in the late steps of ribosome biogenesis. The protein is GTPase Der of Gloeobacter violaceus (strain ATCC 29082 / PCC 7421).